The chain runs to 132 residues: Large ribosomal subunit protein uL14 (132 aa).

It belongs to the universal ribosomal protein uL14 family. Part of the 50S ribosomal subunit. Forms a cluster with proteins L3 and L24e, part of which may contact the 16S rRNA in 2 intersubunit bridges.

Its function is as follows. Binds to 23S rRNA. Forms part of two intersubunit bridges in the 70S ribosome. The sequence is that of Large ribosomal subunit protein uL14 from Thermoplasma volcanium (strain ATCC 51530 / DSM 4299 / JCM 9571 / NBRC 15438 / GSS1).